The sequence spans 326 residues: Organic solute transporter subunit alpha (326 aa).

Topologically, residues 1 to 28 (METSNFTLFDPRCRAEAPFAIDAIKQLD) are extracellular. N5 carries N-linked (GlcNAc...) asparagine glycosylation. Residues 29 to 49 (IFGKVLYTVLTLMATASMLVF) form a helical membrane-spanning segment. Residues 50 to 67 (IEECIYIYKKVPAHKKST) lie on the Cytoplasmic side of the membrane. The chain crosses the membrane as a helical span at residues 68–88 (IIWVTGVAPVMAIMSCLGMWV). Residues 89-99 (PRATMFTDMTS) lie on the Extracellular side of the membrane. Residues 100–120 (ATYFAIVVFKFLILMIEEVGG) form a helical membrane-spanning segment. The Cytoplasmic segment spans residues 121-161 (DNAFLRRCEKQTFKISTGPCCCCCPCLPNVPITRRSLFILK). Residues 162–182 (LGSYQFALMKLVLTIFSIVLW) form a helical membrane-spanning segment. At 183–198 (TNGSFSLTNVSASGAA) the chain is on the extracellular side. N-linked (GlcNAc...) asparagine glycosylation is found at N184 and N191. The helical transmembrane segment at 199-219 (IWINSFIGVLTIIALWPVAIM) threads the bilayer. Residues 220–237 (FMHVREALRTLKIVPKYA) are Cytoplasmic-facing. Residues 238–258 (MYQLVLILSQLQTAIINILAL) traverse the membrane as a helical segment. A glycan (N-linked (GlcNAc...) asparagine) is linked at N259. Over 259-275 (NGTIACSPPYSSQARGY) the chain is Extracellular. A helical transmembrane segment spans residues 276-296 (MMSQQLLIVEMFIITLVTRVL). Residues 297-326 (YRRQYEPIPEPDDVEEKKTVLSSKKAIDVA) are Cytoplasmic-facing.

Belongs to the OST-alpha family. In terms of assembly, interacts with slc51b. The Ost-alpha/Ost-beta complex is a heterodimer composed of alpha (slc51a) and beta (slc51b) subunit.

It is found in the cell membrane. It localises to the endoplasmic reticulum membrane. It catalyses the reaction taurocholate(out) = taurocholate(in). The enzyme catalyses prostaglandin E2(out) = prostaglandin E2(in). It carries out the reaction estrone 3-sulfate(out) = estrone 3-sulfate(in). The catalysed reaction is dehydroepiandrosterone 3-sulfate(out) = dehydroepiandrosterone 3-sulfate(in). It catalyses the reaction tauroursodeoxycholate(out) = tauroursodeoxycholate(in). The enzyme catalyses glycoursodeoxycholate(out) = glycoursodeoxycholate(in). It carries out the reaction glycocholate(out) = glycocholate(in). The catalysed reaction is taurochenodeoxycholate(out) = taurochenodeoxycholate(in). It catalyses the reaction glycochenodeoxycholate(out) = glycochenodeoxycholate(in). The enzyme catalyses taurodeoxycholate(out) = taurodeoxycholate(in). It carries out the reaction glycodeoxycholate(out) = glycodeoxycholate(in). Functionally, essential component of the Ost-alpha/Ost-beta complex, a heterodimer that acts as the intestinal basolateral transporter responsible for the translocation of bile acids (such as taurocholate), steroids (such as estrone sulfate), and eicosanoids (such as prostaglandin E2). The protein is Organic solute transporter subunit alpha (slc51a) of Danio rerio (Zebrafish).